The chain runs to 524 residues: MFKLLDNFNEKSKSIMIEQMKQQYCLLQYDKEMVTNFLNFINHHYIWNCYHNNSNNSYNNDLDMNNIQEKLIIEHLDPLMLINSYTDYPFWSSMLMLAVNEAVTTTTTTTTTTTTSTTTTTSGIIPLSSTIIPSTIISPVKTSLSSLSMMTIDDLQNDISKINYEEDFFSKLLKCTLIRNENSYSNEIEQLSLSSSSSSSSSSSSSSSSSSCSTNSSSSVYMSEKKANGFFVKDILSFDKHKVIRRQKTDDSFEKEVLVKGRDEEKKEEVQGRQKKDNINKYKIINCTDISHNNMNYVCDNSKEPQVENLQKNKLINKFTVGSEEEEDNDDINDAAKNNNTNYLRKTVSDDGMKLKSNRNHNKKLGSRGRIHEITSSNKLNTNDPSRLHLPAWVFCTRYSDRPSSGPRIRKPRMNRSNDELNLKRPRTSFTVPQLKRLSQEFEKNRYLDELRRKKLATELDLRESQVKIWFQNKRAKTKKASGAQNCLALHLMAEGLYNHSVRVRSDIEEDEEDSDDMNTSEKE.

The disordered stretch occupies residues 194–218 (SSSSSSSSSSSSSSSSSSCSTNSSS). A DNA-binding region (homeobox) is located at residues 423–482 (LKRPRTSFTVPQLKRLSQEFEKNRYLDELRRKKLATELDLRESQVKIWFQNKRAKTKKAS).

It belongs to the engrailed homeobox family.

The protein localises to the nucleus. The protein is Homeobox protein engrailed-like SMOX-2 (SMOX-2) of Schistosoma mansoni (Blood fluke).